The primary structure comprises 1027 residues: 2-oxoglutarate dehydrogenase, mitochondrial (1027 aa).

Residues Arg315, Asp413, Asn446, Ile448, and Gln674 each contribute to the thiamine diphosphate site. Positions 413, 446, and 448 each coordinate Mg(2+).

The protein belongs to the alpha-ketoglutarate dehydrogenase family. As to quaternary structure, homodimer. Component of the 2-oxoglutarate dehydrogenase complex. The cofactor is thiamine diphosphate. Mg(2+) is required as a cofactor.

The protein resides in the mitochondrion matrix. It carries out the reaction N(6)-[(R)-lipoyl]-L-lysyl-[protein] + 2-oxoglutarate + H(+) = N(6)-[(R)-S(8)-succinyldihydrolipoyl]-L-lysyl-[protein] + CO2. In terms of biological role, the 2-oxoglutarate dehydrogenase complex catalyzes the overall conversion of 2-oxoglutarate to succinyl-CoA and CO(2). It contains multiple copies of three enzymatic components: 2-oxoglutarate dehydrogenase (E1), dihydrolipoamide succinyltransferase (E2) and lipoamide dehydrogenase (E3). The protein is 2-oxoglutarate dehydrogenase, mitochondrial (ogdh-1) of Caenorhabditis briggsae.